Consider the following 395-residue polypeptide: Multiple organellar RNA editing factor 8, chloroplastic/mitochondrial (395 aa).

The transit peptide at 1–56 (MATHTISRSILCRPAKSLSFLFTRSFASSAPLAKSPASSLLSRSRPLVAAFSSVFR) directs the protein to the chloroplast and mitochondrion. A compositionally biased stretch (basic and acidic residues) spans 211-236 (ANERNRRNDRPRNNDRSRNFERRREN). The segment at 211-395 (ANERNRRNDR…RDGSGNPYQG (185 aa)) is disordered. The span at 240-300 (GPPPQRPPMG…GPRHPPPYGA (61 aa)) shows a compositional bias: pro residues. The span at 313-334 (QNYGGTPPPNYGGAPPANNMGG) shows a compositional bias: low complexity. Over residues 335 to 355 (APPPNYGGGPPPQYGAVPPPQ) the composition is skewed to pro residues. The span at 356 to 385 (YGGAPPQNNNYQQQGSGMQQPQYQNNYPPN) shows a compositional bias: low complexity.

This sequence belongs to the MORF family. In terms of assembly, interacts with protoporphyrinogen oxidase 1 PPOX1. Interacts with PCMP-H52/MEF10. Homodimer and heterodimers with MORF1/RIP8, MORF2/RIP2, MORF3/RIP3, MORF4/RIP4, MORF5/RIP5, MORF6/RIP6 and MORF7/RIP7. Interacts with RBG3/ORRM3. Interacts with PCMP-A2/PMD1. Interacts with ORRM1 and VAT3/OZ1. Interacts with PCMP-H13/MEF35. Interacts with RBG5/ORRM4. Interacts with ORRM6.

Its subcellular location is the mitochondrion. The protein localises to the plastid. It is found in the chloroplast. In terms of biological role, involved in organellar RNA editing. Required for the processing of numerous RNA editing sites in mitochondria and plastids. Binds to the plastid RARE1 factor, a pentatricopeptide repeat-containing protein involved in RNA editing. The protein is Multiple organellar RNA editing factor 8, chloroplastic/mitochondrial of Arabidopsis thaliana (Mouse-ear cress).